We begin with the raw amino-acid sequence, 216 residues long: Transmembrane emp24 domain-containing protein eca (216 aa).

A signal peptide spans methionine 1–glycine 20. At leucine 21–serine 182 the chain is on the lumenal side. One can recognise a GOLD domain in the interval arginine 30 to valine 126. The stretch at alanine 134 to asparagine 164 forms a coiled coil. Residues arginine 183–methionine 203 traverse the membrane as a helical segment. The Cytoplasmic segment spans residues arginine 204 to valine 216. Residues lysine 213 to valine 216 carry the Prevents secretion from ER motif.

It belongs to the EMP24/GP25L family.

It is found in the endoplasmic reticulum membrane. Functionally, eca and bai are essential, though not redundant, for dorsoventral patterning of the embryo. Specifically required during early embryogenesis for the activity of maternal tkv, while the zygotic tkv is not affected. Involved in Golgi organization. The chain is Transmembrane emp24 domain-containing protein eca from Drosophila ananassae (Fruit fly).